The chain runs to 144 residues: Small ribosomal subunit protein uS11 (144 aa).

Residues 123–144 are disordered; sequence EDVTPVPTDSTRRKGSRRGRRL. Residues 135–144 are compositionally biased toward basic residues; that stretch reads RKGSRRGRRL.

The protein belongs to the universal ribosomal protein uS11 family.

The protein is Small ribosomal subunit protein uS11 (RPS14) of Trypanosoma brucei brucei.